We begin with the raw amino-acid sequence, 379 residues long: Cytochrome b (379 aa).

The next 4 membrane-spanning stretches (helical) occupy residues 33-53 (FGSL…FLAM), 77-98 (WLIR…YLHI), 113-133 (WNVG…GYVL), and 178-198 (FFAF…VHLI). Positions 83 and 97 each coordinate heme b. Heme b contacts are provided by His182 and His196. His201 is a binding site for a ubiquinone. 4 helical membrane-spanning segments follow: residues 226–246 (YKDI…ALFS), 288–308 (LGGV…PLLH), 320–340 (FTQV…WIGG), and 347–367 (FIII…VLAP).

The protein belongs to the cytochrome b family. The cytochrome bc1 complex contains 3 respiratory subunits (MT-CYB, CYC1 and UQCRFS1), 2 core proteins (UQCRC1 and UQCRC2) and probably 6 low-molecular weight proteins. It depends on heme b as a cofactor.

Its subcellular location is the mitochondrion inner membrane. Functionally, component of the ubiquinol-cytochrome c reductase complex (complex III or cytochrome b-c1 complex) that is part of the mitochondrial respiratory chain. The b-c1 complex mediates electron transfer from ubiquinol to cytochrome c. Contributes to the generation of a proton gradient across the mitochondrial membrane that is then used for ATP synthesis. The sequence is that of Cytochrome b (mt-cyb) from Poeciliopsis occidentalis (Gila topminnow).